Here is a 533-residue protein sequence, read N- to C-terminus: T-complex protein 1 subunit delta (533 aa).

A disordered region spans residues 1–26 (MSAPAAAPAKVLPSRSDFDEKEKEKD). The span at 16–26 (SDFDEKEKEKD) shows a compositional bias: basic and acidic residues.

It belongs to the TCP-1 chaperonin family. Heterooligomeric complex of about 850 to 900 kDa that forms two stacked rings, 12 to 16 nm in diameter.

The protein resides in the cytoplasm. Molecular chaperone; assists the folding of proteins upon ATP hydrolysis. Known to play a role, in vitro, in the folding of actin and tubulin. In Dictyostelium discoideum (Social amoeba), this protein is T-complex protein 1 subunit delta (cct4).